The chain runs to 65 residues: Sarcoplasmic/endoplasmic reticulum calcium ATPase regulator ARLN (65 aa).

An N-acetylmethionine modification is found at Met-1. A disordered region spans residues 1-36; the sequence is MEVSQAASGTDGVRERRGSFEAGRRNQDEAPQSGMN. Residues 12-28 are compositionally biased toward basic and acidic residues; sequence GVRERRGSFEAGRRNQD. Phosphoserine is present on Ser-19. A helical transmembrane segment spans residues 44-64; the sequence is WLDLWLFILFDLALFVFVYLL.

In terms of assembly, homooligomer. Can also form heterooligomers with other sarcoplasmic/endoplasmic reticulum calcium ATPase (SERCA) regulators ERLN, PLN, SLN and STRIT1/DWORF. Monomer. Interacts as a monomer with ATP2A2/SERCA2; the interaction results in inhibition of ATP2A2 Ca(2+) affinity. In the embryo, expressed in heart, epidermal epithelium, salivary gland, brown fat, intestinal epithelium and bladder urothelium.

It is found in the endoplasmic reticulum membrane. In terms of biological role, inhibits the activity of the calcium ATPases ATP2A2/SERCA2 and ATP2A3/SERCA3 by decreasing their apparent affinity for Ca(2+). In Mus musculus (Mouse), this protein is Sarcoplasmic/endoplasmic reticulum calcium ATPase regulator ARLN (Arln).